Reading from the N-terminus, the 215-residue chain is Nascent polypeptide-associated complex subunit alpha (215 aa).

Residues 1 to 81 (MPGEATETVP…SEKKARKAMS (81 aa)) form a disordered region. Residues 9 to 28 (VPATEQELPQPQAETGSGTE) show a composition bias toward polar residues. The segment covering 29–42 (SDSDESVPELEEQD) has biased composition (acidic residues). Position 43 is a phosphoserine; by ILK1 (Ser-43). The span at 44-57 (TQATTQQAQLAAAA) shows a compositional bias: low complexity. A required for DNA-binding region spans residues 69–80 (QSRSEKKARKAM). Positions 70–135 (SRSEKKARKA…AKIEDLSQQA (66 aa)) constitute an NAC-A/B domain. The segment at 93-108 (RVTIRKSKNILFVITK) is RNA/DNA-binding. Phosphoserine is present on Ser-132. Lys-142 is subject to N6-acetyllysine; alternate. Lys-142 is covalently cross-linked (Glycyl lysine isopeptide (Lys-Gly) (interchain with G-Cter in SUMO2); alternate). Thr-159 carries the post-translational modification Phosphothreonine; by GSK3-beta. Thr-161 is modified (phosphothreonine). 4 positions are modified to phosphoserine: Ser-166, Ser-186, Ser-191, and Ser-203. Residues 176–213 (VEVKDIELVMSQANVSRAKAVRALKNNSNDIVNAIMEL) form the UBA domain.

Belongs to the NAC-alpha family. In terms of assembly, interacts with TBP and JUN. Part of the nascent polypeptide-associated complex (NAC), which is a heterodimer of NACA and BTF3 (via NAC-A/B domains). NAC associates with ribosomes through the BTF3/NACB subunit and contacts the ribosomal protein L23, which is positioned near the exiting site. Both subunits can contact nascent polypeptide chains. NACA may also form homodimers, and only this form binds DNA. Post-translationally, phosphorylation of Thr-159 by GSK3B may promote proteasome mediated degradation. Phosphorylation of Ser-43 by ILK during cell adhesion may promote nuclear localization. Ubiquitously expressed.

Its subcellular location is the cytoplasm. The protein localises to the nucleus. Prevents inappropriate targeting of non-secretory polypeptides to the endoplasmic reticulum (ER). Binds to nascent polypeptide chains as they emerge from the ribosome and blocks their interaction with the signal recognition particle (SRP), which normally targets nascent secretory peptides to the ER. Also reduces the inherent affinity of ribosomes for protein translocation sites in the ER membrane (M sites). May act as a specific coactivator for JUN, binding to DNA and stabilizing the interaction of JUN homodimers with target gene promoters. In Homo sapiens (Human), this protein is Nascent polypeptide-associated complex subunit alpha (NACA).